We begin with the raw amino-acid sequence, 98 residues long: NADH-ubiquinone oxidoreductase chain 4L (98 aa).

A run of 3 helical transmembrane segments spans residues Met-1–Met-21, Ser-29–Leu-49, and Ile-61–Val-81.

Belongs to the complex I subunit 4L family. In terms of assembly, core subunit of respiratory chain NADH dehydrogenase (Complex I) which is composed of 45 different subunits.

Its subcellular location is the mitochondrion inner membrane. It catalyses the reaction a ubiquinone + NADH + 5 H(+)(in) = a ubiquinol + NAD(+) + 4 H(+)(out). Functionally, core subunit of the mitochondrial membrane respiratory chain NADH dehydrogenase (Complex I) which catalyzes electron transfer from NADH through the respiratory chain, using ubiquinone as an electron acceptor. Part of the enzyme membrane arm which is embedded in the lipid bilayer and involved in proton translocation. The chain is NADH-ubiquinone oxidoreductase chain 4L (MT-ND4L) from Pusa hispida (Ringed seal).